A 156-amino-acid chain; its full sequence is Small ribosomal subunit protein uS7 (156 aa).

The protein belongs to the universal ribosomal protein uS7 family. As to quaternary structure, part of the 30S ribosomal subunit. Contacts proteins S9 and S11.

In terms of biological role, one of the primary rRNA binding proteins, it binds directly to 16S rRNA where it nucleates assembly of the head domain of the 30S subunit. Is located at the subunit interface close to the decoding center, probably blocks exit of the E-site tRNA. This is Small ribosomal subunit protein uS7 from Cutibacterium acnes (strain DSM 16379 / KPA171202) (Propionibacterium acnes).